Consider the following 322-residue polypeptide: MNEDLRIYDVAIVGGGAGGIFASTISNYFNLNSILIEKKSYLGGQPMELYPNKFIYDFPCFFEIKSSDVIKKLIQQNKEQKNSNIQLDTDILNITWQTINEQELFLFETNKNSFYAKKIILASGNGSFNPRKLEINNEPIDSPFIHYSLNLETEIYKNKKILVLGGGDSAVEWANYFVEEKITNNVAIIHRRNEYRSSSFMIDCLSKNNILQKLNYEIIDFNESNKTLTIKHKETEKEQTLPFDYVLVQYGQISSPINIELLNQINKEKGKYVIDLNQKTNIKNIYAIGDATHFYCKPNTIITACAEAVRALWHISKNKKDW.

Residues Glu37, Gln45, Tyr50, Ile91, Phe128, and Asp290 each coordinate FAD.

This sequence belongs to the ferredoxin--NADP reductase type 2 family. Homodimer. It depends on FAD as a cofactor.

It catalyses the reaction 2 reduced [2Fe-2S]-[ferredoxin] + NADP(+) + H(+) = 2 oxidized [2Fe-2S]-[ferredoxin] + NADPH. This Malacoplasma penetrans (strain HF-2) (Mycoplasma penetrans) protein is Ferredoxin--NADP reductase.